A 370-amino-acid chain; its full sequence is Probable protein phosphatase 2C 67 (370 aa).

The PPM-type phosphatase domain occupies 35–344; it reads TFGEFSMAMI…DDITVIVVYL (310 aa). Mn(2+)-binding residues include aspartate 77, glycine 78, aspartate 276, and aspartate 335.

This sequence belongs to the PP2C family. As to quaternary structure, interacts with SAUR19. Interacts with AHA2 at the plasma membrane. The cofactor is Mg(2+). It depends on Mn(2+) as a cofactor.

Its subcellular location is the cell membrane. The catalysed reaction is O-phospho-L-seryl-[protein] + H2O = L-seryl-[protein] + phosphate. It carries out the reaction O-phospho-L-threonyl-[protein] + H2O = L-threonyl-[protein] + phosphate. Functionally, dephosphorylates and represses plasma membrane H(+)-ATPases (PM H(+)-ATPases, e.g. AHA1 and AHA2), thus influencing negatively plant growth and fitness. Promotes the apical hook maintenance of etiolated seedlings. The sequence is that of Probable protein phosphatase 2C 67 from Arabidopsis thaliana (Mouse-ear cress).